Here is a 634-residue protein sequence, read N- to C-terminus: DNA-directed RNA polymerase subunit gamma (634 aa).

Zn(2+) is bound by residues C74, C76, C89, and C92. Positions 471, 473, and 475 each coordinate Mg(2+).

This sequence belongs to the RNA polymerase beta' chain family. RpoC1 subfamily. As to quaternary structure, in cyanobacteria the RNAP catalytic core is composed of 2 alpha, 1 beta, 1 beta', 1 gamma and 1 omega subunit. When a sigma factor is associated with the core the holoenzyme is formed, which can initiate transcription. It depends on Mg(2+) as a cofactor. Zn(2+) is required as a cofactor.

It catalyses the reaction RNA(n) + a ribonucleoside 5'-triphosphate = RNA(n+1) + diphosphate. In terms of biological role, DNA-dependent RNA polymerase catalyzes the transcription of DNA into RNA using the four ribonucleoside triphosphates as substrates. In Synechococcus sp. (strain CC9902), this protein is DNA-directed RNA polymerase subunit gamma.